A 483-amino-acid polypeptide reads, in one-letter code: Trigger factor (483 aa).

The 82-residue stretch at 162-243 (GDYVSLDLSA…VRGVKEKELP (82 aa)) folds into the PPIase FKBP-type domain. The disordered stretch occupies residues 459–483 (AVAPGDGDATVEPVEPVEAETDGNG). Acidic residues predominate over residues 473–483 (EPVEAETDGNG).

This sequence belongs to the FKBP-type PPIase family. Tig subfamily.

Its subcellular location is the cytoplasm. It catalyses the reaction [protein]-peptidylproline (omega=180) = [protein]-peptidylproline (omega=0). Functionally, involved in protein export. Acts as a chaperone by maintaining the newly synthesized protein in an open conformation. Functions as a peptidyl-prolyl cis-trans isomerase. The polypeptide is Trigger factor (Frankia casuarinae (strain DSM 45818 / CECT 9043 / HFP020203 / CcI3)).